The following is a 431-amino-acid chain: Acyl transferase 8 (431 aa).

Histidine 169 acts as the Proton acceptor in catalysis. 3 disordered regions span residues 220-247, 260-313, and 331-400; these read VADARGGVRPGVPRPRVLRHERAPRAPA, HHAG…DHLR, and GLRV…PPPT. The span at 224 to 234 shows a compositional bias: low complexity; sequence RGGVRPGVPRP. A compositionally biased stretch (gly residues) spans 264 to 273; it reads DGGGGGGGGR. Composition is skewed to basic residues over residues 297–306 and 335–380; these read ERRRRRRRGR and GRPR…RRLP. A compositionally biased stretch (basic and acidic residues) spans 381 to 394; sequence QRHDAPRLITERAH.

Belongs to the plant acyltransferase family.

Functionally, involved in the incorporation of ferulate into the cell wall. May act as arabinoxylan feruloyl transferase. The polypeptide is Acyl transferase 8 (Oryza sativa subsp. japonica (Rice)).